A 223-amino-acid chain; its full sequence is Protein-lysine N-methyltransferase CG9154 (223 aa).

The protein belongs to the class I-like SAM-binding methyltransferase superfamily. EFM5 family.

It is found in the cytoplasm. In terms of biological role, S-adenosyl-L-methionine-dependent protein-lysine N-methyltransferase that methylates elongation factor 1-alpha. The sequence is that of Protein-lysine N-methyltransferase CG9154 from Drosophila melanogaster (Fruit fly).